Here is a 219-residue protein sequence, read N- to C-terminus: Proteasome subunit beta 2 (219 aa).

Residues 1–25 constitute a propeptide, removed in mature form; by autocatalysis; the sequence is MAEWIAGGLEGPAGRGLDERVVRSG. T26 acts as the Nucleophile in catalysis.

The protein belongs to the peptidase T1B family. In terms of assembly, the 20S proteasome core is composed of 14 alpha and 14 beta subunits that assemble into four stacked heptameric rings, resulting in a barrel-shaped structure. The two inner rings, each composed of seven catalytic beta subunits, are sandwiched by two outer rings, each composed of seven alpha subunits. The catalytic chamber with the active sites is on the inside of the barrel. Has a gated structure, the ends of the cylinder being occluded by the N-termini of the alpha-subunits. Is capped at one or both ends by the proteasome regulatory ATPase, PAN.

Its subcellular location is the cytoplasm. It carries out the reaction Cleavage of peptide bonds with very broad specificity.. The formation of the proteasomal ATPase PAN-20S proteasome complex, via the docking of the C-termini of PAN into the intersubunit pockets in the alpha-rings, triggers opening of the gate for substrate entry. Interconversion between the open-gate and close-gate conformations leads to a dynamic regulation of the 20S proteasome proteolysis activity. Component of the proteasome core, a large protease complex with broad specificity involved in protein degradation. This chain is Proteasome subunit beta 2, found in Aeropyrum pernix (strain ATCC 700893 / DSM 11879 / JCM 9820 / NBRC 100138 / K1).